A 356-amino-acid polypeptide reads, in one-letter code: Malate dehydrogenase, glyoxysomal (356 aa).

A glyoxysome-targeting transit peptide spans 1-36 (MQPIPDVNQRIARISAHLHPPKYQMEESSVLRRANC). NAD(+) is bound by residues 51–57 (GAAGGIG) and D77. Substrate-binding residues include R124 and R130. NAD(+) is bound by residues N137 and 160-162 (ISN). Substrate contacts are provided by N162 and R196. H220 functions as the Proton acceptor in the catalytic mechanism. Residue M271 coordinates NAD(+).

It belongs to the LDH/MDH superfamily. MDH type 1 family. As to quaternary structure, homodimer.

It localises to the glyoxysome. The catalysed reaction is (S)-malate + NAD(+) = oxaloacetate + NADH + H(+). The polypeptide is Malate dehydrogenase, glyoxysomal (MDHG) (Cucumis sativus (Cucumber)).